A 185-amino-acid polypeptide reads, in one-letter code: Ribosome-recycling factor (185 aa).

The protein belongs to the RRF family.

The protein resides in the cytoplasm. Functionally, responsible for the release of ribosomes from messenger RNA at the termination of protein biosynthesis. May increase the efficiency of translation by recycling ribosomes from one round of translation to another. This chain is Ribosome-recycling factor, found in Vesicomyosocius okutanii subsp. Calyptogena okutanii (strain HA).